The sequence spans 902 residues: Chitin synthase 3 (902 aa).

Residues 1–15 are compositionally biased toward basic and acidic residues; that stretch reads MAYNRLDDDYFDNRR. The tract at residues 1–68 is disordered; sequence MAYNRLDDDY…MGPGRHTPSD (68 aa). Residues 19–30 show a composition bias toward pro residues; sequence NRPPPHRTPSPG. Asn80 carries an N-linked (GlcNAc...) asparagine glycan. The disordered stretch occupies residues 104–161; that stretch reads HHDAYYNPTYTPTPNEAQTPYGEPGYEHDGRPLLPQQDSYGQYSDNPQQQQQQQGGLK. Polar residues-rich tracts occupy residues 111 to 121 and 139 to 150; these read PTYTPTPNEAQ and QQDSYGQYSDNP. The next 9 membrane-spanning stretches (helical) occupy residues 449–469, 547–567, 577–597, 623–643, 656–676, 699–719, 731–751, 830–850, and 874–894; these read SAFGFISVLPGAFSAYRYIAL, RWLNGSFFAAIYAIAHFYQFF, IAFFIEFTFNTVNMIFAWFAI, ILGVCFEWLYGVSLITCFVLA, LAMIYFWAIIFCYLLFAAVFI, VVVTLILSIMSTYGIWLVASL, LVQYMLLSPTFTNVLNVYAFC, VVVLLWMVTNFGLAAVVLSTA, and VVLYSVAALSGFKFIGAMWFL.

It belongs to the chitin synthase family. Class II subfamily.

The protein localises to the cell membrane. It carries out the reaction [(1-&gt;4)-N-acetyl-beta-D-glucosaminyl](n) + UDP-N-acetyl-alpha-D-glucosamine = [(1-&gt;4)-N-acetyl-beta-D-glucosaminyl](n+1) + UDP + H(+). Polymerizes chitin, a structural polymer of the cell wall and septum, by transferring the sugar moiety of UDP-GlcNAc to the non-reducing end of the growing chitin polymer. CHS1 and CHS3 have compensatory functions in cell wall modifications in responses to stresses. Might function as a negative regulator on expression of other CHS genes. This Pyricularia oryzae (strain 70-15 / ATCC MYA-4617 / FGSC 8958) (Rice blast fungus) protein is Chitin synthase 3.